We begin with the raw amino-acid sequence, 393 residues long: S-adenosylmethionine synthase (393 aa).

Position 17 (His-17) interacts with ATP. Position 19 (Asp-19) interacts with Mg(2+). Glu-45 lines the K(+) pocket. The L-methionine site is built by Glu-58 and Gln-106. The tract at residues 106–116 (QSAHIAQGVNA) is flexible loop. Residues 171-173 (DAK), 237-238 (KF), Asp-246, 252-253 (RK), Ala-269, and Lys-273 each bind ATP. Residue Asp-246 participates in L-methionine binding. Lys-277 lines the L-methionine pocket.

This sequence belongs to the AdoMet synthase family. Homotetramer; dimer of dimers. Mg(2+) serves as cofactor. It depends on K(+) as a cofactor.

It is found in the cytoplasm. It catalyses the reaction L-methionine + ATP + H2O = S-adenosyl-L-methionine + phosphate + diphosphate. It participates in amino-acid biosynthesis; S-adenosyl-L-methionine biosynthesis; S-adenosyl-L-methionine from L-methionine: step 1/1. Functionally, catalyzes the formation of S-adenosylmethionine (AdoMet) from methionine and ATP. The overall synthetic reaction is composed of two sequential steps, AdoMet formation and the subsequent tripolyphosphate hydrolysis which occurs prior to release of AdoMet from the enzyme. This is S-adenosylmethionine synthase from Ruegeria pomeroyi (strain ATCC 700808 / DSM 15171 / DSS-3) (Silicibacter pomeroyi).